Consider the following 666-residue polypeptide: MAVSWIVFDLWLLTVFLGQIGGHSLFSCEPITLRMCQDLPYNTTFMPNLLNHYDQQTAALAMEPFHPMVNLDCSRDFRPFLCALYAPICMEYGRVTLPCRRLCQRAYSECSKLMEMFGVPWPEDMECSRFPDCDEPYPRLVDLNLVGDPTEGAPVAVQRDYGFWCPRELKIDPDLGYSFLHVRDCSPPCPNMYFRREELSFARYFIGLISIICLSATLFTFLTFLIDVTRFRYPERPIIFYAVCYMMVSLIFFIGFLLEDRVACNASSPAQYKASTVTQGSHNKACTMLFMVLYFFTMAGSVWWVILTITWFLAAVPKWGSEAIEKKALLFHASAWGIPGTLTIILLAMNKIEGDNISGVCFVGLYDVDALRYFVLAPLCLYVVVGVSLLLAGIISLNRVRIEIPLEKENQDKLVKFMIRIGVFSILYLVPLLVVIGCYFYEQAYRGIWETTWIQERCREYHIPCPYQVTQMSRPDLILFLMKYLMALIVGIPSIFWVGSKKTCFEWASFFHGRRKKEIVNESRQVLQEPDFAQSLLRDPNTPIIRKSRGTSTQGTSTHASSTQLAMVDDQRSKAGSVHSKVSSYHGSLHRSRDGRYTPCSYRGMEERLPHGSMSRLTDHSRHSSSHRLNEQSRHSSIRDLSNNPMTHITHGTSMNRVIEEDGTSA.

The signal sequence occupies residues M1–G22. The 114-residue stretch at H23–P136 folds into the FZ domain. The Extracellular segment spans residues H23–F205. 5 cysteine pairs are disulfide-bonded: C28–C89, C36–C82, C73–C110, C99–C133, and C103–C127. N42 carries an N-linked (GlcNAc...) asparagine glycan. A helical transmembrane segment spans residues I206–I226. Residues D227–P237 are Cytoplasmic-facing. A helical transmembrane segment spans residues I238–L258. Topologically, residues E259 to M288 are extracellular. N265 is a glycosylation site (N-linked (GlcNAc...) asparagine). The helical transmembrane segment at L289–I309 threads the bilayer. Topologically, residues T310–A328 are cytoplasmic. Residues L329–M349 traverse the membrane as a helical segment. The Extracellular segment spans residues N350–F374. A glycan (N-linked (GlcNAc...) asparagine) is linked at N356. Residues V375 to I395 traverse the membrane as a helical segment. Residues S396–R420 are Cytoplasmic-facing. A helical membrane pass occupies residues I421–Y441. Topologically, residues E442 to L477 are extracellular. The chain crosses the membrane as a helical span at residues I478–V498. Topologically, residues G499–A666 are cytoplasmic. Positions K502–W507 match the Lys-Thr-X-X-X-Trp motif, mediates interaction with the PDZ domain of Dvl family members motif. The interval R538–A666 is disordered. The segment covering G550–L565 has biased composition (polar residues). Basic and acidic residues predominate over residues L617–I638. Positions R639–N656 are enriched in polar residues.

This sequence belongs to the G-protein coupled receptor Fz/Smo family. In terms of assembly, interacts with VANGL2. Post-translationally, ubiquitinated by ZNRF3, leading to its degradation by the proteasome. In terms of tissue distribution, expressed in the cortex, diencephalon, rostral brainstem and little or no staining is seen in the striatum or cerebellum. Expressed in both hair cells and supporting cells in the utricle, saccule, cristae and the organ of Corti in the inner ear (at protein level). Highly expressed in the CNS. In skin, it is restricted to the epidermis and to the developing hair follicle.

Its subcellular location is the membrane. The protein resides in the cell membrane. It localises to the cell surface. It is found in the apical cell membrane. Receptor for Wnt proteins. Most of frizzled receptors are coupled to the beta-catenin canonical signaling pathway, which leads to the activation of disheveled proteins, inhibition of GSK-3 kinase, nuclear accumulation of beta-catenin and activation of Wnt target genes. A second signaling pathway involving PKC and calcium fluxes has been seen for some family members, but it is not yet clear if it represents a distinct pathway or if it can be integrated in the canonical pathway, as PKC seems to be required for Wnt-mediated inactivation of GSK-3 kinase. Both pathways seem to involve interactions with G-proteins. Activation by Wnt5A stimulates PKC activity via a G-protein-dependent mechanism. Involved in transduction and intercellular transmission of polarity information during tissue morphogenesis and/or in differentiated tissues. Plays a role in controlling early axon growth and guidance processes necessary for the formation of a subset of central and peripheral major fiber tracts. Required for the development of major fiber tracts in the central nervous system, including: the anterior commissure, the corpus callosum, the thalamocortical, corticothalamic and nigrostriatal tracts, the corticospinal tract, the fasciculus retroflexus, the mammillothalamic tract, the medial lemniscus, and ascending fiber tracts from the spinal cord to the brain. In the peripheral nervous system, controls axon growth in distinct populations of cranial and spinal motor neurons, including the facial branchimotor nerve, the hypoglossal nerve, the phrenic nerve, and motor nerves innervating dorsal limbs. Involved in the migration of cranial neural crest cells. May also be implicated in the transmission of sensory information from the trunk and limbs to the brain. Controls commissural sensory axons guidance after midline crossing along the anterior-posterior axis in the developing spinal cord in a Wnt-dependent signaling pathway. Together with FZD6, is involved in the neural tube closure and plays a role in the regulation of the establishment of planar cell polarity (PCP), particularly in the orientation of asymmetric bundles of stereocilia on the apical faces of a subset of auditory and vestibular sensory cells located in the inner ear. Promotes neurogenesis by maintaining sympathetic neuroblasts within the cell cycle in a beta-catenin-dependent manner. This chain is Frizzled-3 (Fzd3), found in Mus musculus (Mouse).